The chain runs to 388 residues: Alanine racemase, catabolic (388 aa).

Lys46 (proton acceptor; specific for D-alanine) is an active-site residue. Residue Lys46 is modified to N6-(pyridoxal phosphate)lysine. Arg145 serves as a coordination point for substrate. Tyr267 (proton acceptor; specific for L-alanine) is an active-site residue. Residue Met315 participates in substrate binding.

This sequence belongs to the alanine racemase family. Pyridoxal 5'-phosphate is required as a cofactor.

It carries out the reaction L-alanine = D-alanine. Its function is as follows. Isomerizes L-alanine to D-alanine which is then oxidized to pyruvate by DadA. This Agrobacterium fabrum (strain C58 / ATCC 33970) (Agrobacterium tumefaciens (strain C58)) protein is Alanine racemase, catabolic (dadB).